A 60-amino-acid polypeptide reads, in one-letter code: Large ribosomal subunit protein uL30 (60 aa).

It belongs to the universal ribosomal protein uL30 family. Part of the 50S ribosomal subunit.

This Leuconostoc citreum (strain KM20) protein is Large ribosomal subunit protein uL30.